Consider the following 82-residue polypeptide: Small ribosomal subunit protein eS27 (82 aa).

4 residues coordinate Zn(2+): Cys37, Cys40, Cys56, and Cys59.

The protein belongs to the eukaryotic ribosomal protein eS27 family. As to quaternary structure, component of the small ribosomal subunit. Mature ribosomes consist of a small (40S) and a large (60S) subunit. The 40S subunit contains about 32 different proteins and 1 molecule of RNA (18S). The 60S subunit contains 45 different proteins and 3 molecules of RNA (25S, 5.8S and 5S). Zn(2+) serves as cofactor.

The protein localises to the cytoplasm. Functionally, component of the ribosome, a large ribonucleoprotein complex responsible for the synthesis of proteins in the cell. The small ribosomal subunit (SSU) binds messenger RNAs (mRNAs) and translates the encoded message by selecting cognate aminoacyl-transfer RNA (tRNA) molecules. The large subunit (LSU) contains the ribosomal catalytic site termed the peptidyl transferase center (PTC), which catalyzes the formation of peptide bonds, thereby polymerizing the amino acids delivered by tRNAs into a polypeptide chain. The nascent polypeptides leave the ribosome through a tunnel in the LSU and interact with protein factors that function in enzymatic processing, targeting, and the membrane insertion of nascent chains at the exit of the ribosomal tunnel. The chain is Small ribosomal subunit protein eS27 (RPS27) from Candida albicans (strain SC5314 / ATCC MYA-2876) (Yeast).